Consider the following 106-residue polypeptide: Large ribosomal subunit protein eL42 (106 aa).

The interval 34-53 is disordered; sequence YAQGKRRYDRKQSGYGGQTK.

Belongs to the eukaryotic ribosomal protein eL42 family. In terms of assembly, component of the large ribosomal subunit.

Its subcellular location is the cytoplasm. Component of the large ribosomal subunit. The ribosome is a large ribonucleoprotein complex responsible for the synthesis of proteins in the cell. The protein is Large ribosomal subunit protein eL42 (Rpl36a) of Canis lupus familiaris (Dog).